Consider the following 222-residue polypeptide: uncharacterized protein (222 aa).

This is an uncharacterized protein from Archaeoglobus fulgidus (strain ATCC 49558 / DSM 4304 / JCM 9628 / NBRC 100126 / VC-16).